The primary structure comprises 342 residues: Ferredoxin--NADP reductase (342 aa).

FAD is bound by residues Cys-17, Asp-36, Gln-44, Tyr-49, Ile-89, Phe-124, Asp-289, and Thr-330.

The protein belongs to the ferredoxin--NADP reductase type 2 family. As to quaternary structure, homodimer. FAD is required as a cofactor.

It catalyses the reaction 2 reduced [2Fe-2S]-[ferredoxin] + NADP(+) + H(+) = 2 oxidized [2Fe-2S]-[ferredoxin] + NADPH. This Rhodopseudomonas palustris (strain BisA53) protein is Ferredoxin--NADP reductase.